A 763-amino-acid polypeptide reads, in one-letter code: Probable ubiquitin carboxyl-terminal hydrolase MINDY-4 (763 aa).

Ser143 is subject to Phosphoserine. Residues 154-368 form a disordered region; sequence SSKRSSHKSR…SQPASLRKNQ (215 aa). A compositionally biased stretch (basic and acidic residues) spans 180–202; the sequence is EKTDKLPMSEPSLDTKRMGEKVR. Ser220 and Ser224 each carry phosphoserine. Polar residues predominate over residues 252-261; it reads ELSTHTSTCP. The segment covering 267 to 278 has biased composition (low complexity); it reads PASSTASTSRSP. Ser296 carries the post-translational modification Phosphoserine. Residues 346 to 355 show a composition bias toward basic and acidic residues; the sequence is TQERPERAFE. Over residues 357-368 the composition is skewed to polar residues; it reads QGSQPASLRKNQ. Residue Cys463 is the Nucleophile of the active site. His683 (proton acceptor) is an active-site residue.

This sequence belongs to the MINDY deubiquitinase family. FAM188 subfamily.

It carries out the reaction Thiol-dependent hydrolysis of ester, thioester, amide, peptide and isopeptide bonds formed by the C-terminal Gly of ubiquitin (a 76-residue protein attached to proteins as an intracellular targeting signal).. In terms of biological role, probable hydrolase that can remove 'Lys-48'-linked conjugated ubiquitin from proteins. In Bos taurus (Bovine), this protein is Probable ubiquitin carboxyl-terminal hydrolase MINDY-4 (MINDY4).